The chain runs to 293 residues: Fructose-bisphosphate aldolase (293 aa).

Ser50 contributes to the D-glyceraldehyde 3-phosphate binding site. Asp85 (proton donor) is an active-site residue. Zn(2+)-binding residues include His86, Asp106, Glu136, and His178. Residue Gly179 coordinates dihydroxyacetone phosphate. His208 lines the Zn(2+) pocket. Residues Gly209–Ser211 and Asn230–Thr233 contribute to the dihydroxyacetone phosphate site.

The protein belongs to the class II fructose-bisphosphate aldolase family. Zn(2+) serves as cofactor.

The enzyme catalyses beta-D-fructose 1,6-bisphosphate = D-glyceraldehyde 3-phosphate + dihydroxyacetone phosphate. Its pathway is carbohydrate degradation; glycolysis; D-glyceraldehyde 3-phosphate and glycerone phosphate from D-glucose: step 4/4. In terms of biological role, catalyzes the aldol condensation of dihydroxyacetone phosphate (DHAP or glycerone-phosphate) with glyceraldehyde 3-phosphate (G3P) to form fructose 1,6-bisphosphate (FBP) in gluconeogenesis and the reverse reaction in glycolysis. This chain is Fructose-bisphosphate aldolase (fba), found in Streptococcus pyogenes serotype M6 (strain ATCC BAA-946 / MGAS10394).